The primary structure comprises 41 residues: Large ribosomal subunit protein bL36 (41 aa).

Belongs to the bacterial ribosomal protein bL36 family.

This chain is Large ribosomal subunit protein bL36, found in Nitrobacter hamburgensis (strain DSM 10229 / NCIMB 13809 / X14).